Consider the following 429-residue polypeptide: Adenylosuccinate synthetase (429 aa).

GTP is bound by residues 13–19 (GDEGKGK) and 41–43 (GHT). Catalysis depends on Asp-14, which acts as the Proton acceptor. Mg(2+) is bound by residues Asp-14 and Gly-41. IMP contacts are provided by residues 14-17 (DEGK), 39-42 (NAGH), Thr-130, Arg-144, Gln-224, Thr-239, and Arg-303. The active-site Proton donor is His-42. 299 to 305 (ATTGRAR) lines the substrate pocket. Residues Arg-305, 331–333 (KLD), and 412–414 (STG) contribute to the GTP site.

Belongs to the adenylosuccinate synthetase family. As to quaternary structure, homodimer. Mg(2+) is required as a cofactor.

The protein localises to the cytoplasm. It carries out the reaction IMP + L-aspartate + GTP = N(6)-(1,2-dicarboxyethyl)-AMP + GDP + phosphate + 2 H(+). It functions in the pathway purine metabolism; AMP biosynthesis via de novo pathway; AMP from IMP: step 1/2. Plays an important role in the de novo pathway of purine nucleotide biosynthesis. Catalyzes the first committed step in the biosynthesis of AMP from IMP. The polypeptide is Adenylosuccinate synthetase (Psychrobacter arcticus (strain DSM 17307 / VKM B-2377 / 273-4)).